An 850-amino-acid polypeptide reads, in one-letter code: Tripartite terminase subunit 1 (850 aa).

The C3H1-type zinc-finger motif lies at Cys-191–His-219. Residues Gly-438–Arg-489 form a disordered region. Over residues Thr-439–Asn-457 the composition is skewed to low complexity. The segment covering Asn-458–Gly-481 has biased composition (gly residues). Tyr-709–Gln-716 provides a ligand contact to ATP. Positions Trp-801–Leu-831 are disordered. The span at Arg-816–Arg-827 shows a compositional bias: basic residues. The Nuclear localization signal signature appears at Arg-822 to Arg-827.

The protein belongs to the herpesviridae TRM1 protein family. As to quaternary structure, associates with TRM2 and TRM3 to form the tripartite terminase complex. Interacts with portal protein.

Its subcellular location is the host nucleus. In terms of biological role, component of the molecular motor that translocates viral genomic DNA in empty capsid during DNA packaging. Forms a tripartite terminase complex together with TRM2 and TRM3 in the host cytoplasm. Once the complex reaches the host nucleus, it interacts with the capsid portal vertex. This portal forms a ring in which genomic DNA is translocated into the capsid. TRM1 carries an endonuclease activity that plays an important role for the cleavage of concatemeric viral DNA into unit length genomes. The protein is Tripartite terminase subunit 1 of Homo sapiens (Human).